A 185-amino-acid polypeptide reads, in one-letter code: Threonylcarbamoyl-AMP synthase (185 aa).

The 182-residue stretch at 4–185 (SWRVQQAAQD…IATGQVMRAG (182 aa)) folds into the YrdC-like domain.

It belongs to the SUA5 family. TsaC subfamily.

The protein localises to the cytoplasm. It carries out the reaction L-threonine + hydrogencarbonate + ATP = L-threonylcarbamoyladenylate + diphosphate + H2O. Its function is as follows. Required for the formation of a threonylcarbamoyl group on adenosine at position 37 (t(6)A37) in tRNAs that read codons beginning with adenine. Catalyzes the conversion of L-threonine, HCO(3)(-)/CO(2) and ATP to give threonylcarbamoyl-AMP (TC-AMP) as the acyladenylate intermediate, with the release of diphosphate. In Pseudomonas savastanoi pv. phaseolicola (strain 1448A / Race 6) (Pseudomonas syringae pv. phaseolicola (strain 1448A / Race 6)), this protein is Threonylcarbamoyl-AMP synthase.